We begin with the raw amino-acid sequence, 64 residues long: Bubble protein (64 aa).

Cystine bridges form between cysteine 3-cysteine 30, cysteine 18-cysteine 38, cysteine 28-cysteine 54, and cysteine 49-cysteine 64.

It localises to the secreted. Functionally, may act as a toxin. May recognize a molecule or part of a molecule with a negatively charged surface potential. The sequence is that of Bubble protein from Penicillium brevicompactum.